Consider the following 507-residue polypeptide: Probable cytosol aminopeptidase (507 aa).

Lys275 and Asp280 together coordinate Mn(2+). Residue Lys287 is part of the active site. Mn(2+) is bound by residues Asp298, Asp357, and Glu359. Residue Arg361 is part of the active site.

Belongs to the peptidase M17 family. Requires Mn(2+) as cofactor.

It is found in the cytoplasm. It carries out the reaction Release of an N-terminal amino acid, Xaa-|-Yaa-, in which Xaa is preferably Leu, but may be other amino acids including Pro although not Arg or Lys, and Yaa may be Pro. Amino acid amides and methyl esters are also readily hydrolyzed, but rates on arylamides are exceedingly low.. It catalyses the reaction Release of an N-terminal amino acid, preferentially leucine, but not glutamic or aspartic acids.. Functionally, presumably involved in the processing and regular turnover of intracellular proteins. Catalyzes the removal of unsubstituted N-terminal amino acids from various peptides. This chain is Probable cytosol aminopeptidase, found in Rhodopirellula baltica (strain DSM 10527 / NCIMB 13988 / SH1).